A 125-amino-acid polypeptide reads, in one-letter code: MFPTHVLLIVIACVTAFVYGGGGKRPRVCRYSSDGPVCRTNIECSDPEVHCYRKPGHPYGRCCVKRPYACPRGSSNRYDDPEGFPPLVQRCPYAYPFFCRPGYYCRTKTGGSTEFYGVCCPLRVG.

A signal peptide spans Met1 to Ala16.

Weakly glycosylated. Expressed at highest levels in mantle, followed by adductor muscle. Found in the nacreous shell layer (at protein level).

The protein resides in the secreted. In Unio pictorum (Painter's mussel), this protein is Upsalin.